A 502-amino-acid polypeptide reads, in one-letter code: Protein Dok-7 (502 aa).

The PH domain maps to 4 to 109 (SVVVEGYARL…WDARLRYSLG (106 aa)). An IRS-type PTB domain is found at 105-210 (RYSLGEVHRF…RGISPTRGPF (106 aa)). Disordered stretches follow at residues 210 to 232 (FGLRPVLPDPSTSETSSEERLNH), 249 to 279 (STASYCPSAGGDDRSISGSSDTSDTSHSDCS), 291 to 358 (TSIQ…GSFS), and 418 to 482 (EVGG…GHPG). Composition is skewed to low complexity over residues 264–279 (ISGSSDTSDTSHSDCS) and 301–316 (AGAKAAAQSAEKPLPS). Residues 336–346 (GRQSSSDSGIA) are compositionally biased toward polar residues. Over residues 347–358 (TGSHSSYSGSFS) the composition is skewed to low complexity. A compositionally biased stretch (basic and acidic residues) spans 459–473 (PNEHFRSPSESKKSS).

The protein resides in the cell membrane. It localises to the synapse. Functionally, probable muscle-intrinsic activator of MUSK that plays an essential role in neuromuscular synaptogenesis. Acts in aneural activation of MUSK and subsequent acetylcholine receptor (AchR) clustering in myotubes. This Takifugu rubripes (Japanese pufferfish) protein is Protein Dok-7 (dok7).